A 331-amino-acid polypeptide reads, in one-letter code: Aspartate carbamoyltransferase catalytic subunit (331 aa).

Positions 62 and 63 each coordinate carbamoyl phosphate. Lysine 90 contacts L-aspartate. Arginine 112, histidine 145, and glutamine 148 together coordinate carbamoyl phosphate. L-aspartate contacts are provided by arginine 185 and arginine 246. Positions 287 and 288 each coordinate carbamoyl phosphate.

The protein belongs to the aspartate/ornithine carbamoyltransferase superfamily. ATCase family. As to quaternary structure, heterododecamer (2C3:3R2) of six catalytic PyrB chains organized as two trimers (C3), and six regulatory PyrI chains organized as three dimers (R2).

It catalyses the reaction carbamoyl phosphate + L-aspartate = N-carbamoyl-L-aspartate + phosphate + H(+). Its pathway is pyrimidine metabolism; UMP biosynthesis via de novo pathway; (S)-dihydroorotate from bicarbonate: step 2/3. Its function is as follows. Catalyzes the condensation of carbamoyl phosphate and aspartate to form carbamoyl aspartate and inorganic phosphate, the committed step in the de novo pyrimidine nucleotide biosynthesis pathway. In Synechocystis sp. (strain ATCC 27184 / PCC 6803 / Kazusa), this protein is Aspartate carbamoyltransferase catalytic subunit.